Consider the following 341-residue polypeptide: HTH-type transcriptional repressor PurR (341 aa).

Positions 2-56 (ATIKDVAKRANVSTTTVSHVINKTRFVAEETRNAVWAAIKELHYSPSAVARSLKV) constitute an HTH lacI-type domain. Residues 4–23 (IKDVAKRANVSTTTVSHVIN) constitute a DNA-binding region (H-T-H motif). A DNA-binding region spans residues 48–56 (SAVARSLKV). Residues Tyr-73, Arg-190, Thr-192, Phe-221, and Asp-275 each coordinate hypoxanthine.

In terms of assembly, homodimer.

It functions in the pathway purine metabolism; purine nucleotide biosynthesis [regulation]. Is the main repressor of the genes involved in the de novo synthesis of purine nucleotides, regulating purB, purC, purEK, purF, purHD, purL, purMN and guaBA expression. PurR is allosterically activated to bind its cognate DNA by binding the purine corepressors, hypoxanthine or guanine, thereby effecting transcription repression. In Salmonella typhimurium (strain LT2 / SGSC1412 / ATCC 700720), this protein is HTH-type transcriptional repressor PurR.